The following is a 282-amino-acid chain: Bifunctional protein FolD (282 aa).

NADP(+)-binding positions include asparagine 165–serine 167, serine 190, and isoleucine 231.

It belongs to the tetrahydrofolate dehydrogenase/cyclohydrolase family. Homodimer.

It catalyses the reaction (6R)-5,10-methylene-5,6,7,8-tetrahydrofolate + NADP(+) = (6R)-5,10-methenyltetrahydrofolate + NADPH. It carries out the reaction (6R)-5,10-methenyltetrahydrofolate + H2O = (6R)-10-formyltetrahydrofolate + H(+). It participates in one-carbon metabolism; tetrahydrofolate interconversion. In terms of biological role, catalyzes the oxidation of 5,10-methylenetetrahydrofolate to 5,10-methenyltetrahydrofolate and then the hydrolysis of 5,10-methenyltetrahydrofolate to 10-formyltetrahydrofolate. This Clostridium botulinum (strain Okra / Type B1) protein is Bifunctional protein FolD.